The primary structure comprises 409 residues: Arginine deiminase (409 aa).

Catalysis depends on Cys399, which acts as the Amidino-cysteine intermediate.

The protein belongs to the arginine deiminase family.

Its subcellular location is the cytoplasm. It catalyses the reaction L-arginine + H2O = L-citrulline + NH4(+). The protein operates within amino-acid degradation; L-arginine degradation via ADI pathway; carbamoyl phosphate from L-arginine: step 1/2. The chain is Arginine deiminase from Streptococcus pneumoniae (strain JJA).